The following is a 241-amino-acid chain: Probable transcriptional regulatory protein lin1570 (241 aa).

Residues 1–14 (MAGHSKWNNIQGRK) are compositionally biased toward polar residues. Residues 1 to 22 (MAGHSKWNNIQGRKNAQDSKRS) form a disordered region.

Belongs to the TACO1 family.

The protein localises to the cytoplasm. This chain is Probable transcriptional regulatory protein lin1570, found in Listeria innocua serovar 6a (strain ATCC BAA-680 / CLIP 11262).